The following is a 429-amino-acid chain: Adenylosuccinate synthetase (429 aa).

Residues Gly-12–Lys-18 and Gly-40–Thr-42 each bind GTP. The Proton acceptor role is filled by Asp-13. 2 residues coordinate Mg(2+): Asp-13 and Gly-40. IMP is bound by residues Asp-13 to Lys-16, Asn-38 to His-41, Thr-128, Arg-142, Gln-223, Thr-238, and Arg-302. Catalysis depends on His-41, which acts as the Proton donor. A substrate-binding site is contributed by Thr-298–Arg-304. GTP contacts are provided by residues Arg-304, Ser-330–Asp-332, and Ser-412–Gly-414.

It belongs to the adenylosuccinate synthetase family. Homodimer. Mg(2+) serves as cofactor.

It localises to the cytoplasm. It catalyses the reaction IMP + L-aspartate + GTP = N(6)-(1,2-dicarboxyethyl)-AMP + GDP + phosphate + 2 H(+). It participates in purine metabolism; AMP biosynthesis via de novo pathway; AMP from IMP: step 1/2. Plays an important role in the de novo pathway of purine nucleotide biosynthesis. Catalyzes the first committed step in the biosynthesis of AMP from IMP. This is Adenylosuccinate synthetase from Lysinibacillus sphaericus (strain C3-41).